The sequence spans 119 residues: NADH-quinone oxidoreductase subunit A (119 aa).

The next 3 helical transmembrane spans lie at 7 to 27 (YPVL…VSIG), 63 to 83 (LVAI…PWGV), and 88 to 108 (IGWP…LGFA).

Belongs to the complex I subunit 3 family. As to quaternary structure, NDH-1 is composed of 14 different subunits. Subunits NuoA, H, J, K, L, M, N constitute the membrane sector of the complex.

It localises to the cell inner membrane. It catalyses the reaction a quinone + NADH + 5 H(+)(in) = a quinol + NAD(+) + 4 H(+)(out). Functionally, NDH-1 shuttles electrons from NADH, via FMN and iron-sulfur (Fe-S) centers, to quinones in the respiratory chain. The immediate electron acceptor for the enzyme in this species is believed to be ubiquinone. Couples the redox reaction to proton translocation (for every two electrons transferred, four hydrogen ions are translocated across the cytoplasmic membrane), and thus conserves the redox energy in a proton gradient. This Burkholderia vietnamiensis (strain G4 / LMG 22486) (Burkholderia cepacia (strain R1808)) protein is NADH-quinone oxidoreductase subunit A.